The following is a 403-amino-acid chain: G-protein coupled receptor family C group 5 member B (403 aa).

Residues 1 to 28 form the signal peptide; the sequence is MFVASERKMRAHQVLTFLLLFVITSVAS. Residues 29–56 are Extracellular-facing; sequence ENASTSRGCGLDLLPQYVSLCDLDAIWG. Asn30 is a glycosylation site (N-linked (GlcNAc...) asparagine). A helical membrane pass occupies residues 57–77; the sequence is IVVEAVAGAGALITLLLMLIL. The Cytoplasmic segment spans residues 78–94; it reads LVRLPFIKEKEKKSPVG. A helical transmembrane segment spans residues 95-115; that stretch reads LHFLFLLGTLGLFGLTFAFII. Residues 116 to 126 lie on the Extracellular side of the membrane; that stretch reads QEDETICSVRR. The chain crosses the membrane as a helical span at residues 127 to 147; that stretch reads FLWGVLFALCFSCLLSQAWRV. Topologically, residues 148–162 are cytoplasmic; that stretch reads RRLVRHGTGPAGWQL. Residues 163–183 traverse the membrane as a helical segment; it reads VGLALCLMLVQVIIAVEWLVL. At 184-199 the chain is on the extracellular side; that stretch reads TVLRDTRPACAYEPMD. Residues 200-220 form a helical membrane-spanning segment; sequence FVMALIYDMVLLVVTLGLALF. The Cytoplasmic segment spans residues 221–234; that stretch reads TLCGKFKRWKLNGA. Residues 235–255 traverse the membrane as a helical segment; sequence FLLITAFLSVLIWVAWMTMYL. The Extracellular portion of the chain corresponds to 256–271; that stretch reads FGNVKLQQGDAWNDPT. A helical membrane pass occupies residues 272 to 292; it reads LAITLAASGWVFVIFHAIPEI. Over 293-403 the chain is Cytoplasmic; the sequence is HCTLLPALQE…PPSHTGRHLW (111 aa). The interval 349 to 371 is disordered; it reads GFPNGSLGKRPSGSLGKRPSAPF. Residue Ser354 is modified to Phosphoserine.

The protein belongs to the G-protein coupled receptor 3 family. As to expression, expression is high in kidney, pancreas, and testis, medium in brain, heart, prostate, small intestine, and spleen, low in liver, placenta, skeletal muscle, colon, ovary, and thymus, and not detectable in lung and peripheral leukocyte. According to PubMed:10945465, highly expressed in most brain areas examined, with the highest levels observed in corpus callosum, caudate nucleus, putamen, substantia nigra, thalamus, hippocampus, and spinal cord as well as in dorsal root ganglia (DRG). Expressed in glia limitans, ependymal cells, astrocyte cell bodies, the perivascular region in astrocyte endfeet, but not in neurons. In the periphery, expression levels are relatively low, compared to the CNS, with the strongest expression detected in pancreas, testis, uterus, and stomach.

It is found in the cell membrane. It localises to the cytoplasmic vesicle membrane. Its function is as follows. G-protein coupled receptor involved in the regulation of cell volume. The sequence is that of G-protein coupled receptor family C group 5 member B (GPRC5B) from Homo sapiens (Human).